The primary structure comprises 154 residues: Transcriptional repressor NrdR (154 aa).

The segment at 3 to 34 is a zinc-finger region; it reads CPFCGHAATQVIDTRMSEEGDTVRRRRRCESC. The region spanning 49 to 139 is the ATP-cone domain; sequence PAVVKKNGSR…VYRSFEDLAE (91 aa).

This sequence belongs to the NrdR family. The cofactor is Zn(2+).

Negatively regulates transcription of bacterial ribonucleotide reductase nrd genes and operons by binding to NrdR-boxes. The chain is Transcriptional repressor NrdR from Ralstonia pickettii (strain 12J).